The following is a 1589-amino-acid chain: Polyhomeotic-proximal chromatin protein (1589 aa).

Basic and acidic residues predominate over residues 1–15 (MDRRALKFMQKRADT). Disordered stretches follow at residues 1–85 (MDRR…GGKQ), 107–174 (KYDV…NCNS), 252–290 (LQQQ…STAI), 1112–1244 (LSTA…STTT), and 1260–1294 (AVST…NGSK). 3 stretches are compositionally biased toward low complexity: residues 18–28 (DTTTPVSTTAS), 60–80 (NHNN…QQQQ), and 119–139 (AQQQ…VTPT). Residues 154–174 (HTPSTPNRPSAPSTPNTNCNS) are compositionally biased toward polar residues. The segment covering 260–271 (NGGGAASAGAGG) has biased composition (gly residues). Residues 272 to 285 (AASPANSQQSQQQQ) are compositionally biased toward low complexity. S1145 bears the Phosphoserine mark. T1148 carries the post-translational modification Phosphothreonine. Residues 1157-1180 (TTPKSSTPATVSASVEASSSTGEA) show a composition bias toward low complexity. The segment covering 1189–1221 (RSSTPSKGATTPTSKQSNAAVQPPSSTTPNSVS) has biased composition (polar residues). 2 stretches are compositionally biased toward low complexity: residues 1230 to 1244 (TCGS…STTT) and 1260 to 1290 (AVST…SSIS). The FCS-type zinc finger occupies 1356 to 1389 (SAPGSDMVACEQCGKMEHKAKLKRKRYCSPGCSR). Zn(2+)-binding residues include C1365, C1368, C1383, and C1387. The region spanning 1513–1577 (WSVDDVSNFI…VAKVESIKEV (65 aa)) is the SAM domain.

As to quaternary structure, component of PRC1 complex, which contains many PcG proteins like Pc, ph, Scm, Psc, Sce and also chromatin-remodeling proteins such as histone deacetylases. This complex is distinct from the Esc/E(z) complex, at least composed of esc, E(z), Su(z)12, HDAC1/Rpd3 and Caf1-55. The 2 complexes however cooperate and interact together during the first 3 hours of development to establish PcG silencing. Interacts with the SAM domain of Scm via its SAM domain in vitro. Interacts with Trl in vivo and with corto in vitro. In terms of tissue distribution, salivary glands.

It localises to the nucleus. Polycomb group (PcG) protein. PcG proteins act by forming multiprotein complexes, which are required to maintain the transcriptionally repressive state of homeotic genes throughout development. PcG proteins are not required to initiate repression, but to maintain it during later stages of development. Component of the PcG multiprotein PRC1 complex, a complex that acts via chromatin remodeling and modification of histones; it mediates monoubiquitination of histone H2A 'Lys-118', rendering chromatin heritably changed in its expressibility. Plays a role in regulating the expression of other pair-rule genes such as eve, ftz, and H. The polypeptide is Polyhomeotic-proximal chromatin protein (ph-p) (Drosophila melanogaster (Fruit fly)).